Reading from the N-terminus, the 556-residue chain is Cytochrome P450 monooxygenase polC (556 aa).

Residues 17 to 37 (LCFAISLLCAVAIATFLHKLY) form a helical membrane-spanning segment. C479 serves as a coordination point for heme.

The protein belongs to the cytochrome P450 family. Heme serves as cofactor.

It localises to the membrane. It carries out the reaction motiol + 3 reduced [NADPH--hemoprotein reductase] + 3 O2 = 4beta-carboxyl motiol + 3 oxidized [NADPH--hemoprotein reductase] + 4 H2O + 4 H(+). It participates in secondary metabolite biosynthesis; terpenoid biosynthesis. In terms of biological role, cytochrome P450 monooxygenase; part of the gene cluster that mediates the biosynthesis of antifungal fernane-type triterpenoid polytolypin. PolC uses motiol as a substrate and converts the methyl group at position C-4 to a carboxyl group. Within the pathway, the triterpene cyclase polA first catalyzes the cyclization of 2,3-oxidosqualene to motiol, polC converts the 4-alpha-methyl group of motiol to a carboxyl group, polB is responsible for appending a hydroxyl group at the 2-alpha position and polE is a dual functional P450, which can catalyze the formation of both the 1-beta-hydroxyl group and 10-beta-carboxyl group. This is Cytochrome P450 monooxygenase polC from Polytolypa hystricis (strain UAMH7299).